Consider the following 288-residue polypeptide: Elongation factor Ts (288 aa).

Residues 82–85 (TDFV) are involved in Mg(2+) ion dislocation from EF-Tu.

It belongs to the EF-Ts family.

It is found in the cytoplasm. In terms of biological role, associates with the EF-Tu.GDP complex and induces the exchange of GDP to GTP. It remains bound to the aminoacyl-tRNA.EF-Tu.GTP complex up to the GTP hydrolysis stage on the ribosome. This chain is Elongation factor Ts, found in Chlorobium phaeovibrioides (strain DSM 265 / 1930) (Prosthecochloris vibrioformis (strain DSM 265)).